Consider the following 228-residue polypeptide: Casparian strip membrane protein 2 (228 aa).

At 1 to 65 the chain is on the cytoplasmic side; it reads MSTSDAAATV…FRRADRGSRC (65 aa). Residues 66–86 form a helical membrane-spanning segment; sequence VALLDLVLRVAAFGPALAAAI. The Extracellular segment spans residues 87–113; that stretch reads ATGTSDETLSVFTQFFQFHARFDDFPA. A helical transmembrane segment spans residues 114-134; that stretch reads LLFFMVANAIAAGYLVLSLPF. Residues 135 to 149 lie on the Cytoplasmic side of the membrane; the sequence is SAVVVLRPQAIGLRH. A helical membrane pass occupies residues 150-170; the sequence is LLLICDLIIAALLTAAAAAAA. The Extracellular segment spans residues 171 to 201; the sequence is AIVDLAHSGNQRANWVPICMQFHGFCQRTSG. Residues 202–222 form a helical membrane-spanning segment; that stretch reads AVVASFLAVLVLLFLVILAAF. Over 223-228 the chain is Cytoplasmic; it reads TIRKRC.

This sequence belongs to the Casparian strip membrane proteins (CASP) family. In terms of assembly, homodimer and heterodimers.

Its subcellular location is the cell membrane. In terms of biological role, regulates membrane-cell wall junctions and localized cell wall deposition. Required for establishment of the Casparian strip membrane domain (CSD) and the subsequent formation of Casparian strips, a cell wall modification of the root endodermis that determines an apoplastic barrier between the intraorganismal apoplasm and the extraorganismal apoplasm and prevents lateral diffusion. The sequence is that of Casparian strip membrane protein 2 from Zea mays (Maize).